We begin with the raw amino-acid sequence, 318 residues long: Peroxisomal and mitochondrial division factor 1 (318 aa).

Positions 1–39 (MADVEDRAAKGISDYDQGGVKTTELERKIEDMENKNQEL) are disordered. Over 1–291 (MADVEDRAAK…QKGSLEAEYQ (291 aa)) the chain is Cytoplasmic. A coiled-coil region spans residues 19 to 260 (GVKTTELERK…KKVEEGNKTV (242 aa)). Residues 23–39 (TELERKIEDMENKNQEL) are compositionally biased toward basic and acidic residues. The helical transmembrane segment at 292–312 (WPVVAAGSVGAAGLVAATFFV) threads the bilayer. At 313 to 318 (CYSKLR) the chain is on the mitochondrial intermembrane side.

As to quaternary structure, homodimer. Interacts with PMD2.

The protein localises to the peroxisome membrane. It localises to the mitochondrion outer membrane. Involved in morphogenesis and proliferation of peroxisomes and mitochondria, independently from the previously defined pathway controlled by the FIS1-DRP3 complex. The chain is Peroxisomal and mitochondrial division factor 1 from Arabidopsis thaliana (Mouse-ear cress).